Consider the following 188-residue polypeptide: uncharacterized protein (188 aa).

The signal sequence occupies residues 1 to 23 (MVRPKLAFYILPLLLAFLGSALG). A glycan (N-linked (GlcNAc...) asparagine) is linked at Asn-74.

This is an uncharacterized protein from Mus musculus (Mouse).